Here is a 2430-residue protein sequence, read N- to C-terminus: Transcription factor HIVEP2 (2430 aa).

The segment at 1–127 (MDTGDTALGQ…SLEGPPWLFP (127 aa)) is disordered. Composition is skewed to polar residues over residues 11–22 (KATSRSGETDSV) and 96–110 (HSLS…QGMT). 2 C2H2-type zinc fingers span residues 189 to 211 (YICP…IRSH) and 217 to 239 (YPCI…RKSH). Disordered stretches follow at residues 271–302 (IHSD…PPVP), 374–418 (SEKK…NTNA), and 744–995 (AHGH…SGKH). Residues 381–418 (SEPSLNLLSPHSKGSTDSGYFSRSESAEQQISPPNTNA) show a composition bias toward polar residues. Basic and acidic residues-rich tracts occupy residues 744 to 753 (AHGHSDRLDP) and 775 to 784 (DPDKMTDLGK). A compositionally biased stretch (polar residues) spans 792 to 804 (SVIQHTNSLSRPN). Serine 811 is subject to Phosphoserine. Over residues 853–863 (SKPTPSQQVPQ) the composition is skewed to polar residues. Residues 884 to 908 (RVTEEPDKPEKEKEAPTKEPEKPVE) are compositionally biased toward basic and acidic residues. The Nuclear localization signal motif lies at 929–935 (PKKKRLR). Phosphoserine occurs at positions 942, 947, 1040, 1431, and 1435. Residues 944–974 (GESSFESTGTGLSRSPSQESNLSHSSSFSMS) show a composition bias toward low complexity. The interval 1472–1584 (KKGLSRPQKP…GGQQEEEGKA (113 aa)) is disordered. Composition is skewed to low complexity over residues 1499 to 1520 (SRSS…SASG) and 1560 to 1569 (SDMSMSPQSS). 2 C2H2-type zinc fingers span residues 1783–1805 (YICE…IRTH) and 1811–1835 (YVCK…SKAH). 2 disordered regions span residues 1848-1931 (SVDD…SSLP) and 1986-2117 (FQSK…SPRR). A compositionally biased stretch (acidic residues) spans 1850 to 1860 (DDTETEEAENM). Positions 1861–1871 (EELHKTSEKHS) are enriched in basic and acidic residues. A compositionally biased stretch (acidic residues) spans 1883 to 1909 (DAEESDGEDGDDNDDDDEDDDDFDDQG). Basic and acidic residues predominate over residues 1991–2001 (TDSEPDKDRLD). Over residues 2013-2037 (SSEPSSSPRDFSPSSYRSSPGYDSS) the composition is skewed to low complexity. 10 consecutive repeat copies span residues 2037-2040 (SPCR), 2043-2046 (SPKR), 2055-2058 (SPRR), 2067-2070 (SPMR), 2073-2076 (SPRK), 2090-2093 (SPRR), 2096-2099 (SPRR), 2102-2105 (SPGK), 2114-2117 (SPRR), and 2129-2132 (SPRR). The interval 2037–2132 (SPCRDNSPKR…TTIRAPSPRR (96 aa)) is 10 X 4 AA tandem repeats of S-P-[RGMKC]-[RK]. Residues 2062–2085 (PRRDLSPMRHLSPRKEAALRREMS) show a composition bias toward basic and acidic residues. Residue serine 2102 is modified to Phosphoserine. A compositionally biased stretch (basic and acidic residues) spans 2107 to 2116 (ITARRDLSPR). Disordered stretches follow at residues 2226 to 2252 (PALS…GAPG), 2268 to 2309 (KQAP…QEEN), and 2352 to 2430 (SIRH…NQLH). Low complexity predominate over residues 2271 to 2289 (PQVLQSSGLPSSPSSPRLL). Serine 2281 and serine 2285 each carry phosphoserine. Over residues 2291–2301 (KQSTSEDSLNS) the composition is skewed to polar residues. Over residues 2371–2380 (PDLHDGEKDT) the composition is skewed to basic and acidic residues. The segment covering 2406 to 2417 (FQSSKELSLSTE) has biased composition (polar residues). A phosphoserine mark is found at serine 2413 and serine 2415.

Interacts with TCF4. Expressed in heart, lung, skeletal muscle and liver. In the brain expressed in cerebral cortex, hippocampus, corpora amygdala and cerebellar cortex.

It is found in the nucleus. Specifically binds to the DNA sequence 5'-GGGACTTTCC-3' which is found in the enhancer elements of numerous viral promoters such as those of SV40, CMV, or HIV1. In addition, related sequences are found in the enhancer elements of a number of cellular promoters, including those of the class I MHC, interleukin-2 receptor, somatostatin receptor II, and interferon-beta genes. It may act in T-cell activation. This chain is Transcription factor HIVEP2 (Hivep2), found in Mus musculus (Mouse).